The sequence spans 398 residues: 8-amino-7-oxononanoate synthase (398 aa).

Arg23 is a substrate binding site. Position 110–111 (110–111) interacts with pyridoxal 5'-phosphate; that stretch reads GY. His135 is a substrate binding site. Pyridoxal 5'-phosphate contacts are provided by Ser181, His209, and Thr238. At Lys241 the chain carries N6-(pyridoxal phosphate)lysine. Thr355 is a substrate binding site.

This sequence belongs to the class-II pyridoxal-phosphate-dependent aminotransferase family. BioF subfamily. In terms of assembly, homodimer. Requires pyridoxal 5'-phosphate as cofactor.

The enzyme catalyses 6-carboxyhexanoyl-[ACP] + L-alanine + H(+) = (8S)-8-amino-7-oxononanoate + holo-[ACP] + CO2. It participates in cofactor biosynthesis; biotin biosynthesis. Its function is as follows. Catalyzes the decarboxylative condensation of pimeloyl-[acyl-carrier protein] and L-alanine to produce 8-amino-7-oxononanoate (AON), [acyl-carrier protein], and carbon dioxide. The sequence is that of 8-amino-7-oxononanoate synthase from Cellvibrio japonicus (strain Ueda107) (Pseudomonas fluorescens subsp. cellulosa).